A 255-amino-acid polypeptide reads, in one-letter code: Acetylglutamate kinase (255 aa).

Residues 40 to 41, R62, and N153 each bind substrate; that span reads GG.

Belongs to the acetylglutamate kinase family. ArgB subfamily.

It localises to the cytoplasm. The enzyme catalyses N-acetyl-L-glutamate + ATP = N-acetyl-L-glutamyl 5-phosphate + ADP. The protein operates within amino-acid biosynthesis; L-arginine biosynthesis; N(2)-acetyl-L-ornithine from L-glutamate: step 2/4. Functionally, catalyzes the ATP-dependent phosphorylation of N-acetyl-L-glutamate. The chain is Acetylglutamate kinase from Bacillus mycoides (strain KBAB4) (Bacillus weihenstephanensis).